Consider the following 430-residue polypeptide: Glutamate-1-semialdehyde 2,1-aminomutase (430 aa).

Position 265 is an N6-(pyridoxal phosphate)lysine (K265).

The protein belongs to the class-III pyridoxal-phosphate-dependent aminotransferase family. HemL subfamily. In terms of assembly, homodimer. The cofactor is pyridoxal 5'-phosphate.

It localises to the cytoplasm. The enzyme catalyses (S)-4-amino-5-oxopentanoate = 5-aminolevulinate. Its pathway is porphyrin-containing compound metabolism; protoporphyrin-IX biosynthesis; 5-aminolevulinate from L-glutamyl-tRNA(Glu): step 2/2. The polypeptide is Glutamate-1-semialdehyde 2,1-aminomutase (Shewanella baltica (strain OS223)).